The primary structure comprises 122 residues: Large ribosomal subunit protein uL14 (122 aa).

Belongs to the universal ribosomal protein uL14 family. In terms of assembly, part of the 50S ribosomal subunit. Forms a cluster with proteins L3 and L19. In the 70S ribosome, L14 and L19 interact and together make contacts with the 16S rRNA in bridges B5 and B8.

In terms of biological role, binds to 23S rRNA. Forms part of two intersubunit bridges in the 70S ribosome. The chain is Large ribosomal subunit protein uL14 from Brucella anthropi (strain ATCC 49188 / DSM 6882 / CCUG 24695 / JCM 21032 / LMG 3331 / NBRC 15819 / NCTC 12168 / Alc 37) (Ochrobactrum anthropi).